Consider the following 189-residue polypeptide: Elongation factor P (189 aa).

An N6-(3,6-diaminohexanoyl)-5-hydroxylysine modification is found at K34.

This sequence belongs to the elongation factor P family. Post-translationally, may be beta-lysylated on the epsilon-amino group of Lys-34 by the combined action of EpmA and EpmB, and then hydroxylated on the C5 position of the same residue by EpmC (if this protein is present). Lysylation is critical for the stimulatory effect of EF-P on peptide-bond formation. The lysylation moiety may extend toward the peptidyltransferase center and stabilize the terminal 3-CCA end of the tRNA. Hydroxylation of the C5 position on Lys-34 may allow additional potential stabilizing hydrogen-bond interactions with the P-tRNA.

Its subcellular location is the cytoplasm. It functions in the pathway protein biosynthesis; polypeptide chain elongation. Involved in peptide bond synthesis. Alleviates ribosome stalling that occurs when 3 or more consecutive Pro residues or the sequence PPG is present in a protein, possibly by augmenting the peptidyl transferase activity of the ribosome. Modification of Lys-34 is required for alleviation. This chain is Elongation factor P, found in Legionella pneumophila (strain Lens).